A 215-amino-acid chain; its full sequence is Deoxyribose-phosphate aldolase (215 aa).

Catalysis depends on aspartate 89, which acts as the Proton donor/acceptor. Residue lysine 150 is the Schiff-base intermediate with acetaldehyde of the active site. Catalysis depends on lysine 174, which acts as the Proton donor/acceptor.

This sequence belongs to the DeoC/FbaB aldolase family. DeoC type 1 subfamily.

The protein localises to the cytoplasm. The enzyme catalyses 2-deoxy-D-ribose 5-phosphate = D-glyceraldehyde 3-phosphate + acetaldehyde. It participates in carbohydrate degradation; 2-deoxy-D-ribose 1-phosphate degradation; D-glyceraldehyde 3-phosphate and acetaldehyde from 2-deoxy-alpha-D-ribose 1-phosphate: step 2/2. Functionally, catalyzes a reversible aldol reaction between acetaldehyde and D-glyceraldehyde 3-phosphate to generate 2-deoxy-D-ribose 5-phosphate. The protein is Deoxyribose-phosphate aldolase of Natronomonas pharaonis (strain ATCC 35678 / DSM 2160 / CIP 103997 / JCM 8858 / NBRC 14720 / NCIMB 2260 / Gabara) (Halobacterium pharaonis).